A 680-amino-acid chain; its full sequence is Translation factor GUF1 homolog, chloroplastic (680 aa).

Residues 1–51 (MAAKINSLAALVSLQASHHHHXSTPFYFSPFSPHLSTTLTSRRRSLRSAVV) constitute a chloroplast transit peptide. One can recognise a tr-type G domain in the interval 83 to 264 (SNIRNFCIIA…AIVKRIPPPC (182 aa)). GTP contacts are provided by residues 92–99 (AHIDHGKS), 157–161 (DTPGH), and 211–214 (NKID).

The protein belongs to the TRAFAC class translation factor GTPase superfamily. Classic translation factor GTPase family. LepA subfamily.

The protein localises to the plastid. It localises to the chloroplast. It carries out the reaction GTP + H2O = GDP + phosphate + H(+). Promotes chloroplast protein synthesis. May act as a fidelity factor of the translation reaction, by catalyzing a one-codon backward translocation of tRNAs on improperly translocated ribosomes. The polypeptide is Translation factor GUF1 homolog, chloroplastic (Vitis vinifera (Grape)).